The primary structure comprises 215 residues: MRSIASKKLVIATHNTGKLHEITTLVAPFGLEIQSAKELDLPEPKETGVTFEENAYIKAFAAAKNTGLPALSDDSGLEVDALGGAPGVYTADWALQSDGTRNFSKAMQKIEDELQKIGAHEKSQRKARFISVICIAWSDAYADYFRGSVEGTFIWPPRGDKGFGFDPIFLPDGYENTFGEMSTEQKHGWKLNDKTPLSHRARAFKLLAENLLTLS.

Residue 13-18 participates in substrate binding; the sequence is THNTGK. Aspartate 74 serves as the catalytic Proton acceptor. Aspartate 74 serves as a coordination point for Mg(2+). Residues serine 75, 163–166, lysine 186, and 199–200 contribute to the substrate site; these read FGFD and HR.

The protein belongs to the HAM1 NTPase family. As to quaternary structure, homodimer. Mg(2+) is required as a cofactor.

It carries out the reaction XTP + H2O = XMP + diphosphate + H(+). It catalyses the reaction dITP + H2O = dIMP + diphosphate + H(+). The enzyme catalyses ITP + H2O = IMP + diphosphate + H(+). Its function is as follows. Pyrophosphatase that catalyzes the hydrolysis of nucleoside triphosphates to their monophosphate derivatives, with a high preference for the non-canonical purine nucleotides XTP (xanthosine triphosphate), dITP (deoxyinosine triphosphate) and ITP. Seems to function as a house-cleaning enzyme that removes non-canonical purine nucleotides from the nucleotide pool, thus preventing their incorporation into DNA/RNA and avoiding chromosomal lesions. The sequence is that of dITP/XTP pyrophosphatase from Bartonella quintana (strain Toulouse) (Rochalimaea quintana).